The chain runs to 712 residues: Polyribonucleotide nucleotidyltransferase (712 aa).

Residues aspartate 488 and aspartate 494 each contribute to the Mg(2+) site. A KH domain is found at 555 to 614 (PKIETINIPTDKIREVIGSGGKVIREIVATTGAKVDINDDGVVKVSASDGAKIKAAIDWI). Residues 624 to 692 (GKIYDGKVVK…DRGKTKLSMK (69 aa)) form the S1 motif domain.

The protein belongs to the polyribonucleotide nucleotidyltransferase family. The cofactor is Mg(2+).

The protein resides in the cytoplasm. It carries out the reaction RNA(n+1) + phosphate = RNA(n) + a ribonucleoside 5'-diphosphate. In terms of biological role, involved in mRNA degradation. Catalyzes the phosphorolysis of single-stranded polyribonucleotides processively in the 3'- to 5'-direction. This chain is Polyribonucleotide nucleotidyltransferase, found in Caulobacter vibrioides (strain NA1000 / CB15N) (Caulobacter crescentus).